A 185-amino-acid chain; its full sequence is Ribosome-recycling factor (185 aa).

Belongs to the RRF family.

It is found in the cytoplasm. Responsible for the release of ribosomes from messenger RNA at the termination of protein biosynthesis. May increase the efficiency of translation by recycling ribosomes from one round of translation to another. This Glaesserella parasuis serovar 5 (strain SH0165) (Haemophilus parasuis) protein is Ribosome-recycling factor.